Here is a 600-residue protein sequence, read N- to C-terminus: Aspartate--tRNA(Asp/Asn) ligase (600 aa).

Glutamate 183 is an L-aspartate binding site. The aspartate stretch occupies residues 207 to 210 (QLFK). L-aspartate is bound at residue arginine 229. Residues 229–231 (RDE) and glutamine 238 contribute to the ATP site. Histidine 456 is a binding site for L-aspartate. Glutamate 490 is an ATP binding site. Arginine 497 contributes to the L-aspartate binding site. ATP is bound at residue 542-545 (GLDR).

This sequence belongs to the class-II aminoacyl-tRNA synthetase family. Type 1 subfamily. As to quaternary structure, homodimer.

It is found in the cytoplasm. The catalysed reaction is tRNA(Asx) + L-aspartate + ATP = L-aspartyl-tRNA(Asx) + AMP + diphosphate. Functionally, aspartyl-tRNA synthetase with relaxed tRNA specificity since it is able to aspartylate not only its cognate tRNA(Asp) but also tRNA(Asn). Reaction proceeds in two steps: L-aspartate is first activated by ATP to form Asp-AMP and then transferred to the acceptor end of tRNA(Asp/Asn). The sequence is that of Aspartate--tRNA(Asp/Asn) ligase from Moorella thermoacetica (strain ATCC 39073 / JCM 9320).